A 453-amino-acid chain; its full sequence is Adenylyltransferase and sulfurtransferase MOCS3 (453 aa).

T62 is subject to Phosphothreonine. ATP-binding positions include G101, D122, S129–R133, K146, and D190–N191. Zn(2+) is bound by residues C231 and C234. Catalysis depends on C248, which acts as the Glycyl thioester intermediate; for adenylyltransferase activity. Residues C306 and C309 each contribute to the Zn(2+) site. The 97-residue stretch at Q355 to P451 folds into the Rhodanese domain. The active-site Cysteine persulfide intermediate; for sulfurtransferase activity is C410.

In the N-terminal section; belongs to the HesA/MoeB/ThiF family. UBA4 subfamily. The cofactor is Zn(2+).

Its subcellular location is the cytoplasm. The protein localises to the cytosol. It catalyses the reaction [molybdopterin-synthase sulfur-carrier protein]-C-terminal Gly-Gly + ATP + H(+) = [molybdopterin-synthase sulfur-carrier protein]-C-terminal Gly-Gly-AMP + diphosphate. The enzyme catalyses [molybdopterin-synthase sulfur-carrier protein]-C-terminal Gly-Gly-AMP + S-sulfanyl-L-cysteinyl-[cysteine desulfurase] + AH2 = [molybdopterin-synthase sulfur-carrier protein]-C-terminal-Gly-aminoethanethioate + L-cysteinyl-[cysteine desulfurase] + A + AMP + 2 H(+). It functions in the pathway tRNA modification; 5-methoxycarbonylmethyl-2-thiouridine-tRNA biosynthesis. The protein operates within cofactor biosynthesis; molybdopterin biosynthesis. Plays a central role in 2-thiolation of mcm(5)S(2)U at tRNA wobble positions of cytosolic tRNA(Lys), tRNA(Glu) and tRNA(Gln). Also essential during biosynthesis of the molybdenum cofactor. Acts by mediating the C-terminal thiocarboxylation of sulfur carriers URM1 and MOCS2A. Its N-terminus first activates URM1 and MOCS2A as acyl-adenylates (-COAMP), then the persulfide sulfur on the catalytic cysteine is transferred to URM1 and MOCS2A to form thiocarboxylation (-COSH) of their C-terminus. The reaction probably involves hydrogen sulfide that is generated from the persulfide intermediate and that acts as a nucleophile towards URM1 and MOCS2A. Subsequently, a transient disulfide bond is formed. Does not use thiosulfate as sulfur donor; NFS1 probably acting as a sulfur donor for thiocarboxylation reactions. The polypeptide is Adenylyltransferase and sulfurtransferase MOCS3 (Drosophila sechellia (Fruit fly)).